The primary structure comprises 123 residues: MEKLRVFELREKSDAELLKLLDDLKQELATFRVSKVTATGTSKLSKITLVRKAVAKVLTVYNQRKKEEARKKYKKLSKTPLNLRPKLTRAKRKALTTKQLTMKTIKERKRAENLPKRKYALLV.

This sequence belongs to the universal ribosomal protein uL29 family.

This is Large ribosomal subunit protein uL29 (RPL35) from Theileria parva (East coast fever infection agent).